We begin with the raw amino-acid sequence, 150 residues long: 3-dehydroquinate dehydratase (150 aa).

Y26 acts as the Proton acceptor in catalysis. Substrate contacts are provided by N77, H83, and D90. H103 functions as the Proton donor in the catalytic mechanism. Substrate-binding positions include 104 to 105 (LS) and R114.

It belongs to the type-II 3-dehydroquinase family. Homododecamer.

It catalyses the reaction 3-dehydroquinate = 3-dehydroshikimate + H2O. Its pathway is metabolic intermediate biosynthesis; chorismate biosynthesis; chorismate from D-erythrose 4-phosphate and phosphoenolpyruvate: step 3/7. Catalyzes a trans-dehydration via an enolate intermediate. The polypeptide is 3-dehydroquinate dehydratase (Yersinia pseudotuberculosis serotype O:1b (strain IP 31758)).